We begin with the raw amino-acid sequence, 648 residues long: Transcriptional regulator ManR (648 aa).

PRD domains lie at 187 to 292 and 297 to 404; these read KFLH…YPLQ and LENA…MQGS. 4 positions are modified to phosphohistidine; by HPr: histidine 222, histidine 281, histidine 334, and histidine 393. Residues 409 to 500 form the PTS EIIB type-2 domain; it reads KKAVIVCHMG…FIRQLGESHR (92 aa). Cysteine 415 carries the phosphocysteine; by EIIA modification. The PTS EIIA type-2 domain maps to 510–648; the sequence is NNTTPFLVFL…VMTFLSHLDY (139 aa). Residue histidine 570 is modified to Phosphohistidine; by EIIB.

This sequence belongs to the transcriptional antiterminator BglG family.

It catalyses the reaction D-mannose(out) + N(pros)-phospho-L-histidyl-[protein] = D-mannose 6-phosphate(in) + L-histidyl-[protein]. Its activity is regulated as follows. The regulatory activity of ManR is modulated by phosphorylation and dephosphorylation of the various ManR domains. It becomes activated via phosphoryl group transfer from PEP, EI and HPr on the two conserved histidine residues in the PRD 2 domain, whereas phosphorylation of the EIIA-like domain on His-570 by the PTS EIIB-Man domain of ManP inactivates ManR. Its function is as follows. Positively regulates the expression of the mannose operon that consists of three genes, manP, manA, and yjdF, which are responsible for the transport and utilization of mannose. Also activates its own expression. This chain is Transcriptional regulator ManR (manR), found in Bacillus subtilis (strain 168).